The primary structure comprises 185 residues: MKLEIHKQLEEKMNGTIDALKFEFGTIRAGRANAQMLDKIRVDYYGTPTPINQIGAISVPEPRILMISPWDKSAMHEIEKAIANSDLGLNPSNDGEVIRLSVPALTEERRKELAKKASKAAEEFKVRIRNERRDANEKIKKMEKGGELTEDELKKAQDEVQKMTDKFIKEIDTLLSKKEKDIMEV.

This sequence belongs to the RRF family.

It is found in the cytoplasm. Its function is as follows. Responsible for the release of ribosomes from messenger RNA at the termination of protein biosynthesis. May increase the efficiency of translation by recycling ribosomes from one round of translation to another. In Clostridioides difficile (strain 630) (Peptoclostridium difficile), this protein is Ribosome-recycling factor.